Here is a 141-residue protein sequence, read N- to C-terminus: Nucleoside diphosphate kinase (141 aa).

6 residues coordinate ATP: lysine 11, tyrosine 59, arginine 87, threonine 93, arginine 104, and asparagine 114. The active-site Pros-phosphohistidine intermediate is the histidine 117.

It belongs to the NDK family. Homotetramer. Mg(2+) is required as a cofactor.

Its subcellular location is the cytoplasm. The catalysed reaction is a 2'-deoxyribonucleoside 5'-diphosphate + ATP = a 2'-deoxyribonucleoside 5'-triphosphate + ADP. The enzyme catalyses a ribonucleoside 5'-diphosphate + ATP = a ribonucleoside 5'-triphosphate + ADP. Major role in the synthesis of nucleoside triphosphates other than ATP. The ATP gamma phosphate is transferred to the NDP beta phosphate via a ping-pong mechanism, using a phosphorylated active-site intermediate. The chain is Nucleoside diphosphate kinase from Orientia tsutsugamushi (strain Boryong) (Rickettsia tsutsugamushi).